A 260-amino-acid polypeptide reads, in one-letter code: Triosephosphate isomerase (260 aa).

A substrate-binding site is contributed by 11-13 (NWK). Catalysis depends on His-103, which acts as the Electrophile. The active-site Proton acceptor is Glu-175. Substrate contacts are provided by residues Gly-181, Ser-220, and 241 to 242 (GG).

It belongs to the triosephosphate isomerase family. Homodimer.

Its subcellular location is the cytoplasm. The enzyme catalyses D-glyceraldehyde 3-phosphate = dihydroxyacetone phosphate. The protein operates within carbohydrate biosynthesis; gluconeogenesis. Its pathway is carbohydrate degradation; glycolysis; D-glyceraldehyde 3-phosphate from glycerone phosphate: step 1/1. Its function is as follows. Involved in the gluconeogenesis. Catalyzes stereospecifically the conversion of dihydroxyacetone phosphate (DHAP) to D-glyceraldehyde-3-phosphate (G3P). The protein is Triosephosphate isomerase of Shewanella sp. (strain MR-4).